A 222-amino-acid polypeptide reads, in one-letter code: Ras-related protein Rab11C (222 aa).

Residue 22–29 (GDSAVGKT) participates in GTP binding. An Effector region motif is present at residues 44 to 52 (SKATIGVEF). GTP is bound by residues 70–74 (DTAGQ) and 128–131 (NKTD). 2 S-geranylgeranyl cysteine lipidation sites follow: C219 and C220.

The protein belongs to the small GTPase superfamily. Rab family.

It is found in the cell membrane. In Nicotiana tabacum (Common tobacco), this protein is Ras-related protein Rab11C (RAB11C).